The chain runs to 749 residues: Protein SWAP (749 aa).

The interval 8-124 is dry CEEERYL; that stretch reads SNVHVQEYKD…RNDQRNAIGF (117 aa). Positions 105 to 118 are enriched in basic and acidic residues; it reads EQEKEEEEKRRNDQ. A disordered region spans residues 105 to 149; the sequence is EQEKEEEEKRRNDQRNAIGFDYGTGKVKARESDSEDEPFEPPEGI. One copy of the SURP motif 1 repeat lies at 166 to 209; the sequence is IIEKTASFIVANGTQMEIVIKAKQRNNAEQFGFLEFDHRLNPFY. Residues 256 to 310 form a disordered region; the sequence is HGSDSEDSDSDYELHPSLLSGGAKRPVTPEKPGAIGPRKKPVEPEKPPDFTLKPV. The stretch at 391–431 is one SURP motif 2 repeat; it reads ILNSYAEHVAQRGLEAEASLAAREDLQLHFMEPKSPYYSYY. Low complexity predominate over residues 458–478; it reads PAPPSAVSSPGPSSLMSLNLS. 3 disordered regions span residues 458–498, 537–592, and 608–749; these read PAPP…SSRL, LRND…QVDR, and KAKK…DRRR. Residues 538–552 are compositionally biased toward basic and acidic residues; the sequence is RNDEPRDESSFRFDP. The span at 560 to 569 shows a compositional bias: polar residues; sequence PSDTTANFSD. The span at 574 to 583 shows a compositional bias: pro residues; that stretch reads FPPPTPPVIP. Composition is skewed to basic and acidic residues over residues 608 to 659 and 679 to 689; these read KAKK…RSLD and EEMKRTDEDRE. Basic residues-rich tracts occupy residues 690–704 and 714–749; these read RKRHRKRSRSRRRSR and EHKKSRKSGRHHRSRSRSSSRDRHRRNRSRSRDRRR.

Functionally, it is a regulator of pre-mRNA splicing (and, possibly, of other RNA processing events). It may regulate its own expression at the level of RNA processing. This is Protein SWAP (swp-1) from Caenorhabditis elegans.